A 437-amino-acid polypeptide reads, in one-letter code: MKPLIAIVGRPNVGKSMLFNRILREKSAIVDSTPGVTRDRHISPGEWQGKQFLLMDTGGYCPEGDVISMAMLEQTLMAIRDADIILFLADVRSGLTYDDLEISKLLQRTFQHKQIFFAVNKVETPQLSIDAESFVSTGFTKPYFVSARDGSGVAELLDDMLDSLPVQEKQLVEKDLPTNLAVVGRPNVGKSSFVNALLGANRLIVSDIPGTTRDAIDSRFTRKKQDFVLIDTAGLRKRTKIDAGIEYYSSLRTDKAIERCDVALVMIDARTGIENQDMKIINMAVERKRGVLLLINKWDLVEKDSKTSAHYEKEVRSHMGNLAYIPLLFISALTKKNLYRAIDTAQEISENRSRKITTSALNRFLEVALAEKHPSTKSGKELKIKYMTQIEAPWPVFAFFCNDPELLQTNFRKFLENKLREHFKLEGVTVSLRFFKK.

EngA-type G domains are found at residues 3–168 (PLIA…PVQE) and 178–353 (TNLA…ENRS). GTP contacts are provided by residues 9–16 (GRPNVGKS), 56–60 (DTGGY), 120–123 (NKVE), 184–191 (GRPNVGKS), 231–235 (DTAGL), and 296–299 (NKWD). The KH-like domain occupies 354 to 437 (RKITTSALNR…VTVSLRFFKK (84 aa)).

Belongs to the TRAFAC class TrmE-Era-EngA-EngB-Septin-like GTPase superfamily. EngA (Der) GTPase family. As to quaternary structure, associates with the 50S ribosomal subunit.

Functionally, GTPase that plays an essential role in the late steps of ribosome biogenesis. This chain is GTPase Der, found in Chlorobium phaeobacteroides (strain DSM 266 / SMG 266 / 2430).